The following is a 463-amino-acid chain: Digalactosyldiacylglycerol synthase 2, chloroplastic (463 aa).

A signal peptide spans M1–A22.

It belongs to the glycosyltransferase group 1 family. Glycosyltransferase 4 subfamily. High expression in nodules infected cells, and low in nodule and root vascular tissue.

The protein resides in the plastid. It localises to the chloroplast outer membrane. Its subcellular location is the plastid outer membrane. The catalysed reaction is a 1,2-diacyl-3-O-(beta-D-galactosyl)-sn-glycerol + UDP-alpha-D-galactose = a 1,2-diacyl-3-O-[alpha-D-galactosyl-(1-&gt;6)-beta-D-galactosyl]-sn-glycerol + UDP + H(+). Functionally, involved in the synthesis of diacylglycerol galactolipids that are specifically found in thylakoid and in nodule peribacteroid membranes. Specific for alpha-glycosidic linkages. This Lotus japonicus (Lotus corniculatus var. japonicus) protein is Digalactosyldiacylglycerol synthase 2, chloroplastic.